A 236-amino-acid polypeptide reads, in one-letter code: Envelope glycoprotein (236 aa).

The Lumenal portion of the chain corresponds to 1 to 202; it reads CQFDGNTISG…EWILGVLNGN (202 aa). Asn-25 carries an N-linked (GlcNAc...) asparagine; by host glycan. 5 disulfide bridges follow: Cys-67/Cys-97, Cys-90/Cys-142, Cys-107/Cys-112, Cys-143/Cys-148, and Cys-182/Cys-186. The helical transmembrane segment at 203–223 threads the bilayer; that stretch reads WMVVAVLIALLILSILLFTLC. 2 binding to the ribonucleoprotein regions span residues 219–231 and 219–236; these read LFTL…PSYR and LFTL…EHKP. Over 224 to 236 the chain is Cytoplasmic; the sequence is CPRRPSYRKEHKP.

The protein belongs to the hantavirus envelope glycoprotein family. As to quaternary structure, homodimer. Homotetramer; forms heterotetrameric Gn-Gc spikes in the pre-fusion conformation. Homotrimer; forms homotrimer in the post-fusion conformation at acidic pH. Interacts (via C-terminus) with the nucleoprotein. Post-translationally, envelope polyprotein precursor is quickly cleaved in vivo just after synthesis, presumably by host signal peptidase.

The protein localises to the virion membrane. It localises to the host cell surface. It is found in the host Golgi apparatus membrane. Its subcellular location is the host endoplasmic reticulum membrane. In terms of biological role, forms homotetramers with glycoprotein N at the surface of the virion. Attaches the virion to host cell receptors including integrin ITGAV/ITGB3. This attachment induces virion internalization predominantly through clathrin-dependent endocytosis. Class II fusion protein that promotes fusion of viral membrane with host endosomal membrane after endocytosis of the virion. The chain is Envelope glycoprotein (GP) from Homo sapiens (Human).